The following is a 236-amino-acid chain: Ubiquinone biosynthesis O-methyltransferase (236 aa).

Residues Arg36, Gly56, Asp77, and Met125 each coordinate S-adenosyl-L-methionine.

This sequence belongs to the methyltransferase superfamily. UbiG/COQ3 family.

It carries out the reaction a 3-demethylubiquinol + S-adenosyl-L-methionine = a ubiquinol + S-adenosyl-L-homocysteine + H(+). It catalyses the reaction a 3-(all-trans-polyprenyl)benzene-1,2-diol + S-adenosyl-L-methionine = a 2-methoxy-6-(all-trans-polyprenyl)phenol + S-adenosyl-L-homocysteine + H(+). It functions in the pathway cofactor biosynthesis; ubiquinone biosynthesis. O-methyltransferase that catalyzes the 2 O-methylation steps in the ubiquinone biosynthetic pathway. This Glaesserella parasuis serovar 5 (strain SH0165) (Haemophilus parasuis) protein is Ubiquinone biosynthesis O-methyltransferase.